We begin with the raw amino-acid sequence, 340 residues long: 3-isopropylmalate dehydrogenase (340 aa).

Substrate is bound by residues Arg-88, Arg-98, Arg-122, and Asp-212. Mg(2+) contacts are provided by Asp-212, Asp-236, and Asp-240. Position 272–284 (272–284 (GSAPDIAGQGIAD)) interacts with NAD(+).

It belongs to the isocitrate and isopropylmalate dehydrogenases family. LeuB type 2 subfamily. As to quaternary structure, homodimer. It depends on Mg(2+) as a cofactor. Mn(2+) serves as cofactor.

The protein resides in the cytoplasm. It catalyses the reaction (2R,3S)-3-isopropylmalate + NAD(+) = 4-methyl-2-oxopentanoate + CO2 + NADH. It participates in amino-acid biosynthesis; L-leucine biosynthesis; L-leucine from 3-methyl-2-oxobutanoate: step 3/4. In terms of biological role, catalyzes the oxidation of 3-carboxy-2-hydroxy-4-methylpentanoate (3-isopropylmalate) to 3-carboxy-4-methyl-2-oxopentanoate. The product decarboxylates to 4-methyl-2 oxopentanoate. The polypeptide is 3-isopropylmalate dehydrogenase (leuB) (Corynebacterium glutamicum (strain ATCC 13032 / DSM 20300 / JCM 1318 / BCRC 11384 / CCUG 27702 / LMG 3730 / NBRC 12168 / NCIMB 10025 / NRRL B-2784 / 534)).